The primary structure comprises 73 residues: Mu-sparatoxin-Hv2 (73 aa).

The signal sequence occupies residues 1 to 20 (MKFAIVITLLLVAFSAVALA). Residues 21 to 35 (DKSIERAVMDLITAR) constitute a propeptide that is removed on maturation. Cystine bridges form between Cys39–Cys53, Cys46–Cys58, and Cys52–Cys68. The residue at position 72 (Phe72) is a Phenylalanine amide.

The protein belongs to the neurotoxin 10 (Hwtx-1) family. As to expression, expressed by the venom gland.

The protein localises to the secreted. Its function is as follows. Insecticidal toxin that potently and irreversibly blocks voltage-gated sodium channels (Nav) in cockroach dorsal unpaired median (DUM) neurons (IC(50)=833.7 nM). It does not change both the steady-state activation and inactivation curves, suggesting it acts as a pore blocker (possibly at Nav site 1). Does not show toxicity when intraperitoneally injected into mouse. The sequence is that of Mu-sparatoxin-Hv2 from Heteropoda venatoria (Brown huntsman spider).